Reading from the N-terminus, the 417-residue chain is Phosphoglycerate kinase 2 (417 aa).

Serine 2 carries the post-translational modification N-acetylserine. Residues serine 2 and serine 4 each carry the phosphoserine modification. At lysine 11 the chain carries N6-acetyllysine. Positions 23, 24, 25, 26, 38, and 39 each coordinate (2R)-3-phosphoglycerate. Lysine 48 bears the N6-acetyllysine mark. (2R)-3-phosphoglycerate is bound by residues serine 62, histidine 63, glycine 65, and arginine 66. An N6-acetyllysine mark is found at lysine 75, lysine 86, and lysine 97. Positions 122 and 123 each coordinate (2R)-3-phosphoglycerate. Residues lysine 131 and lysine 146 each carry the N6-acetyllysine modification. (2R)-3-phosphoglycerate contacts are provided by histidine 170 and arginine 171. Tyrosine 196 is modified (phosphotyrosine). Lysine 199 carries the N6-acetyllysine modification. Residue glycine 214 coordinates ADP. Glycine 214 is a binding site for CDP. Residues alanine 215 and lysine 216 each coordinate AMP. Alanine 215 serves as a coordination point for ATP. Alanine 215 serves as a coordination point for Mg(2+). The Mg(2+) site is built by alanine 218 and aspartate 219. Aspartate 219 is a CDP binding site. Residue lysine 220 coordinates AMP. Lysine 220 lines the ATP pocket. Glycine 238 provides a ligand contact to ADP. Glycine 238 contributes to the CDP binding site. AMP is bound at residue glycine 239. Glycine 239 serves as a coordination point for ATP. Lysine 267 and lysine 291 each carry N6-acetyllysine. Glycine 313 contacts AMP. Residue glycine 313 coordinates ATP. The CDP site is built by glycine 338 and phenylalanine 343. Residue phenylalanine 343 participates in ADP binding. Glutamate 344 is an AMP binding site. ATP-binding residues include glutamate 344, aspartate 375, and threonine 376. Aspartate 375 contributes to the Mg(2+) binding site.

The protein belongs to the phosphoglycerate kinase family. Monomer. Mg(2+) serves as cofactor.

The protein localises to the cytoplasm. It catalyses the reaction (2R)-3-phosphoglycerate + ATP = (2R)-3-phospho-glyceroyl phosphate + ADP. The protein operates within carbohydrate degradation; glycolysis; pyruvate from D-glyceraldehyde 3-phosphate: step 2/5. Essential for sperm motility and male fertility but is not required for the completion of spermatogenesis. The chain is Phosphoglycerate kinase 2 (PGK2) from Macaca fascicularis (Crab-eating macaque).